The primary structure comprises 397 residues: Tryptophan synthase beta chain (397 aa).

K91 bears the N6-(pyridoxal phosphate)lysine mark.

It belongs to the TrpB family. Tetramer of two alpha and two beta chains. Pyridoxal 5'-phosphate serves as cofactor.

The enzyme catalyses (1S,2R)-1-C-(indol-3-yl)glycerol 3-phosphate + L-serine = D-glyceraldehyde 3-phosphate + L-tryptophan + H2O. Its pathway is amino-acid biosynthesis; L-tryptophan biosynthesis; L-tryptophan from chorismate: step 5/5. Its function is as follows. The beta subunit is responsible for the synthesis of L-tryptophan from indole and L-serine. This Bacillus cereus (strain Q1) protein is Tryptophan synthase beta chain.